Consider the following 350-residue polypeptide: Protein RecA (350 aa).

68-75 (GPESSGKT) provides a ligand contact to ATP.

This sequence belongs to the RecA family.

The protein localises to the cytoplasm. In terms of biological role, can catalyze the hydrolysis of ATP in the presence of single-stranded DNA, the ATP-dependent uptake of single-stranded DNA by duplex DNA, and the ATP-dependent hybridization of homologous single-stranded DNAs. It interacts with LexA causing its activation and leading to its autocatalytic cleavage. The chain is Protein RecA from Mycolicibacterium vanbaalenii (strain DSM 7251 / JCM 13017 / BCRC 16820 / KCTC 9966 / NRRL B-24157 / PYR-1) (Mycobacterium vanbaalenii).